The following is a 445-amino-acid chain: ATP-dependent rRNA helicase rrp3 (445 aa).

Residues 1-10 are compositionally biased toward basic and acidic residues; it reads MSKNSSRDSS. Residues 1 to 28 are disordered; sequence MSKNSSRDSSPEEVSPDTETPSTTTAPK. The segment covering 17-28 has biased composition (low complexity); sequence DTETPSTTTAPK. The Q motif motif lies at 28–56; the sequence is KTFRELGVIDSLCEACEELGYTAPTPIQE. The 171-residue stretch at 59–229 folds into the Helicase ATP-binding domain; that stretch reads IPIALEGRDL…RASLSDPVRV (171 aa). An ATP-binding site is contributed by 72 to 79; it reads AETGSGKT. Positions 178–181 match the DEAD box motif; the sequence is DEAD. The 161-residue stretch at 240-400 folds into the Helicase C-terminal domain; it reads KLLQSYLFIP…EYKPEKDEVM (161 aa). A disordered region spans residues 415–445; the sequence is LTMRDMQDKDNKGRGPRNRKRTRDDLDQDDG.

Belongs to the DEAD box helicase family. DDX47/RRP3 subfamily. As to quaternary structure, interacts with the SSU processome.

It is found in the nucleus. It carries out the reaction ATP + H2O = ADP + phosphate + H(+). Its function is as follows. ATP-dependent rRNA helicase required for pre-ribosomal RNA processing. Involved in the maturation of the 35S-pre-rRNA and to its cleavage to mature 18S rRNA. This chain is ATP-dependent rRNA helicase rrp3, found in Aspergillus terreus (strain NIH 2624 / FGSC A1156).